Here is a 302-residue protein sequence, read N- to C-terminus: Glycine--tRNA ligase alpha subunit (302 aa).

Belongs to the class-II aminoacyl-tRNA synthetase family. As to quaternary structure, tetramer of two alpha and two beta subunits.

Its subcellular location is the cytoplasm. It carries out the reaction tRNA(Gly) + glycine + ATP = glycyl-tRNA(Gly) + AMP + diphosphate. The chain is Glycine--tRNA ligase alpha subunit from Xanthomonas oryzae pv. oryzae (strain PXO99A).